The sequence spans 222 residues: tRNA (guanine-N(1)-)-methyltransferase (222 aa).

Residues G111 and L131–I136 each bind S-adenosyl-L-methionine.

Belongs to the RNA methyltransferase TrmD family. As to quaternary structure, homodimer.

It localises to the cytoplasm. The catalysed reaction is guanosine(37) in tRNA + S-adenosyl-L-methionine = N(1)-methylguanosine(37) in tRNA + S-adenosyl-L-homocysteine + H(+). In terms of biological role, specifically methylates guanosine-37 in various tRNAs. This is tRNA (guanine-N(1)-)-methyltransferase from Leptospira borgpetersenii serovar Hardjo-bovis (strain JB197).